Here is a 2087-residue protein sequence, read N- to C-terminus: Rho GTPase-activating protein 32 (2087 aa).

Positions 131 to 245 (GSIQLSLSEE…LTWMEIDNKG (115 aa)) constitute a PX; atypical domain. Residues 259-321 (PAVGAAHVIK…PGHCVELINQ (63 aa)) enclose the SH3 domain. Residues 372–567 (CDLGEHLLNS…FILNHVDVLF (196 aa)) enclose the Rho-GAP domain. Serine 706, serine 709, serine 732, and serine 738 each carry phosphoserine. Residues 818-858 (FLDSPGYSKDKPSANKKDAETGSSQCQTPGSTASSEPVSPL) form a disordered region. The span at 825–837 (SKDKPSANKKDAE) shows a compositional bias: basic and acidic residues. The span at 838–854 (TGSSQCQTPGSTASSEP) shows a compositional bias: polar residues. Serine 852, serine 856, and serine 892 each carry phosphoserine. A compositionally biased stretch (low complexity) spans 927 to 938 (SNTTAQNASSST). Disordered regions lie at residues 927–1038 (SNTT…PPKN), 1103–1143 (PAEQ…EQHH), and 1169–1257 (VPLD…ENTS). Phosphoserine is present on serine 952. Low complexity-rich tracts occupy residues 994 to 1005 (SVSSSQSKAVAS) and 1019 to 1029 (QDSVPVSSVSL). The segment covering 1124–1138 (TTATGDPTHSNTTES) has biased composition (polar residues). The span at 1172–1182 (DSEKSDDHVSF) shows a compositional bias: basic and acidic residues. Over residues 1188 to 1203 (GKNSMPTVSFLDQDQS) the composition is skewed to polar residues. Serine 1203 carries the phosphoserine modification. Basic and acidic residues predominate over residues 1222–1232 (DKLHHPLEFAD). Positions 1391 to 1711 (RVPLLHLRAE…YSYAGLAPRP (321 aa)) are interaction with GAB2. An asymmetric dimethylarginine mark is found at arginine 1523 and arginine 1533. Phosphoserine is present on serine 1585. Residues 1685 to 2087 (PNRDFAFYNP…QHPETQIHAE (403 aa)) form an interaction with FYN region. The disordered stretch occupies residues 1798 to 1896 (PGKTGLLSVA…QFCESKNGPP (99 aa)). The span at 1823–1838 (GEDRFYRRHPEAEMDR) shows a compositional bias: basic and acidic residues. Residues 1847 to 1862 (STQPEKPSLPQKQSSL) show a composition bias toward polar residues. The segment covering 1875–1889 (PEHRAHQEASHRQFC) has biased composition (basic and acidic residues). Arginine 2037 bears the Omega-N-methylarginine mark.

It belongs to the PX domain-containing GAP family. As to quaternary structure, interacts with NTRK1 (via cytoplasmic domain); the interaction is independent of the phosphorylation state of NTRK1. Interacts with SHC3 (via SH2 domain). Interacts with RASA1 (via SH3 domain); the interaction is necessary for the Ras activation and cell transforming activities of ARHGAP32. Interacts with GAB1 and GAB2. Interacts with CRK and CRKL. Found in a complex with CRKL and BCAR1; upon EGF stimulation BCAR1 may be replaced by EGFR. Interacts with NCK1 (via SH3 domain); NCK1 recruits phosphorylated BCAR1 to the complex. Isoform 2 interacts with FYN; the interaction appears to be dependent on tyrosine phosphorylation of ARHGAP32. Interacts with EGFR; the interaction requires EGF stimulation and is increased by SHC3. Interacts with CDC42; the interaction requires constitutively active CDC42. Interacts with CTNNB1. Interacts with GRIN2B. Interacts with DLG4 and CDH2. Interacts with GPHN. Post-translationally, isoform 2 is phosphorylated on multiple tyrosine residues by FYN. Phosphorylated tyrosine residues undergo dephosphorylation after stimulation of NMDA receptors. Phosphorylated in vitro by CaMK2 in the presence of calmodulin and calcium; which inhibits GAP activity. As to expression, isoform 1 and isoform 2 are highly expressed in brain and testis. Isoform 1 is also expressed in other tissues such as lung, liver and spleen.

The protein resides in the postsynaptic density. It is found in the cell projection. The protein localises to the dendritic spine. Its subcellular location is the cytoplasm. It localises to the cell cortex. The protein resides in the endosome membrane. It is found in the golgi apparatus membrane. The protein localises to the endoplasmic reticulum membrane. Its subcellular location is the membrane. Functionally, GTPase-activating protein (GAP) promoting GTP hydrolysis on RHOA, CDC42 and RAC1 small GTPases. May be involved in the differentiation of neuronal cells during the formation of neurite extensions. Involved in NMDA receptor activity-dependent actin reorganization in dendritic spines. May mediate cross-talks between Ras- and Rho-regulated signaling pathways in cell growth regulation. Isoform 2 has higher GAP activity. The sequence is that of Rho GTPase-activating protein 32 (ARHGAP32) from Homo sapiens (Human).